The following is a 317-amino-acid chain: uncharacterized protein (317 aa).

It to M.avium MAV169.

This is an uncharacterized protein from Mycobacterium tuberculosis (strain CDC 1551 / Oshkosh).